We begin with the raw amino-acid sequence, 120 residues long: MFVLTGYEYFLGFLFICSLVPVLALTASKLLRPRDGGPERQTTYESGMEPIGGAWIQFNIRYYMFALVFVVFDVETVFLYPWAVAFNQLGLLAFVEALIFIAILVVALVYAWRKGALEWS.

The next 3 membrane-spanning stretches (helical) occupy residues 2 to 22 (FVLT…LVPV), 64 to 84 (MFAL…PWAV), and 89 to 109 (LGLL…VALV).

This sequence belongs to the complex I subunit 3 family. In terms of assembly, NDH-1 can be composed of about 15 different subunits; different subcomplexes with different compositions have been identified which probably have different functions.

The protein resides in the cellular thylakoid membrane. The catalysed reaction is a plastoquinone + NADH + (n+1) H(+)(in) = a plastoquinol + NAD(+) + n H(+)(out). It catalyses the reaction a plastoquinone + NADPH + (n+1) H(+)(in) = a plastoquinol + NADP(+) + n H(+)(out). Functionally, NDH-1 shuttles electrons from an unknown electron donor, via FMN and iron-sulfur (Fe-S) centers, to quinones in the respiratory and/or the photosynthetic chain. The immediate electron acceptor for the enzyme in this species is believed to be plastoquinone. Couples the redox reaction to proton translocation, and thus conserves the redox energy in a proton gradient. Cyanobacterial NDH-1 also plays a role in inorganic carbon-concentration. The chain is NAD(P)H-quinone oxidoreductase subunit 3 (ndhC) from Synechocystis sp. (strain ATCC 27184 / PCC 6803 / Kazusa).